The chain runs to 313 residues: Aspartate carbamoyltransferase catalytic subunit (313 aa).

Carbamoyl phosphate-binding residues include Arg-55 and Thr-56. Lys-83 is an L-aspartate binding site. The carbamoyl phosphate site is built by Arg-105, His-138, and Gln-141. Positions 171 and 225 each coordinate L-aspartate. The carbamoyl phosphate site is built by Gly-266 and Pro-267.

This sequence belongs to the aspartate/ornithine carbamoyltransferase superfamily. ATCase family. As to quaternary structure, heterododecamer (2C3:3R2) of six catalytic PyrB chains organized as two trimers (C3), and six regulatory PyrI chains organized as three dimers (R2).

The catalysed reaction is carbamoyl phosphate + L-aspartate = N-carbamoyl-L-aspartate + phosphate + H(+). It participates in pyrimidine metabolism; UMP biosynthesis via de novo pathway; (S)-dihydroorotate from bicarbonate: step 2/3. Functionally, catalyzes the condensation of carbamoyl phosphate and aspartate to form carbamoyl aspartate and inorganic phosphate, the committed step in the de novo pyrimidine nucleotide biosynthesis pathway. This chain is Aspartate carbamoyltransferase catalytic subunit, found in Corynebacterium diphtheriae (strain ATCC 700971 / NCTC 13129 / Biotype gravis).